We begin with the raw amino-acid sequence, 205 residues long: uncharacterized protein (205 aa).

This is an uncharacterized protein from Methanococcus vannielii (strain ATCC 35089 / DSM 1224 / JCM 13029 / OCM 148 / SB).